A 332-amino-acid chain; its full sequence is Aquaporin-7-1 (332 aa).

Over 1 to 66 (MSGQHQITEQ…RHAIRMPMAE (66 aa)) the chain is Cytoplasmic. Residues 67–87 (FFGVALLIIFGAGSACQVVLS) form a helical membrane-spanning segment. Over 88–100 (TNPNVASSDRGSF) the chain is Extracellular. Residues 101-121 (LSINLGWAIGIAMGAWVSGGI) traverse the membrane as a helical segment. Residues 122–144 (SGGHINPAITIAMATYRGFPWRR) lie on the Cytoplasmic side of the membrane. The NPA 1 signature appears at 127–129 (NPA). Residues 145-165 (VPSYIFAQVLGGVVGAALVYA) traverse the membrane as a helical segment. At 166-199 (NYIHAIDIFEGGRHVRTQATASLFATYALPYMTQ) the chain is on the extracellular side. A helical membrane pass occupies residues 200–220 (VSCFFSEFLATAVLSMMVLAL). The Cytoplasmic segment spans residues 221–230 (TDNRNGAPTN). Residues 231–251 (GLLPFALFVLFIGLGASLGME) traverse the membrane as a helical segment. Residues 252–283 (TAYALNPARDFGPRLFLAMSGYGKALFNYRSQ) lie on the Extracellular side of the membrane. The NPA 2 signature appears at 257–259 (NPA). A helical transmembrane segment spans residues 284–304 (YWLWAPIIAPVLGAQAGGLLY). At 305-332 (DTFLYDGDNSPIKWRRASSQECQLAEVV) the chain is on the cytoplasmic side.

The protein belongs to the MIP/aquaporin (TC 1.A.8) family.

The protein resides in the membrane. It catalyses the reaction H2O(in) = H2O(out). Water channel required to facilitate the transport of water across membranes. Does not mediate the transport carbon dioxide across the membrane. This Laccaria bicolor (Bicoloured deceiver) protein is Aquaporin-7-1.